Reading from the N-terminus, the 115-residue chain is Toxin-like structure LSTX-D1 (115 aa).

The first 22 residues, 1 to 22, serve as a signal peptide directing secretion; that stretch reads MKVLVLFSVLFLTLFSYSSTEA. The propeptide occupies 23 to 44; it reads IDEFDSDAEEDMLSLMANEQVR. Cystine bridges form between Cys48/Cys63, Cys55/Cys72, Cys62/Cys87, and Cys74/Cys85.

Belongs to the neurotoxin 19 (CSTX) family. 01 subfamily. As to expression, expressed by the venom gland.

It is found in the secreted. This Lycosa singoriensis (Wolf spider) protein is Toxin-like structure LSTX-D1.